The chain runs to 900 residues: Aldos-2-ulose dehydratase (900 aa).

The dehydratase domain stretch occupies residues 1–433 (MYSKVFLKPH…NPSINVFLST (433 aa)). Tyrosine 35 serves as a coordination point for ascopyrone M. Aspartate 101, threonine 103, asparagine 105, phenylalanine 107, and aspartate 109 together coordinate Mg(2+). Ascopyrone M contacts are provided by tyrosine 116, methionine 120, histidine 155, histidine 215, histidine 295, and histidine 337. Residue histidine 155 is the Proton acceptor of the active site. The Zn(2+) site is built by histidine 215, histidine 295, histidine 337, aspartate 343, aspartate 345, aspartate 347, glutamate 349, and glutamate 351. Ascopyrone M contacts are provided by tyrosine 414, tyrosine 419, and alanine 627. The segment at 434–739 (GILAERLDEE…EFPGFETFST (306 aa)) is isomerase domain. 1,5-anhydro-D-fructose is bound by residues alanine 627 and histidine 630. Histidine 630, histidine 632, and glutamate 639 together coordinate Zn(2+). Residues glutamate 639 and histidine 641 each contribute to the ascopyrone M site. Histidine 641 contacts 1,5-anhydro-D-fructose. Histidine 709 contacts Zn(2+). Tryptophan 726 is a binding site for ascopyrone M. Tryptophan 726 contributes to the 1,5-anhydro-D-fructose binding site.

As to quaternary structure, homodimer. Requires Zn(2+) as cofactor.

It carries out the reaction 1,5-anhydro-D-fructose = microthecin + H2O. The enzyme catalyses 1,5-anhydro-D-fructose = ascopyrone M + H2O. It catalyses the reaction ascopyrone M = microthecin. The catalysed reaction is 2-dehydro-D-glucose = cortalcerone + H2O. It participates in carbohydrate metabolism; 1,5-anhydro-D-fructose degradation. Its function is as follows. A bifunctional enzyme which catalyzes the dehydration of anhydrofructose into ascopyrone M, and the isomerization of ascopyrone M into microthecin. To a lesser extent, can also act on 2-dehydro-D-glucopyranose (D-glucosone), leading to the antibiotic cortalcerone. In Phanerodontia chrysosporium (White-rot fungus), this protein is Aldos-2-ulose dehydratase.